A 694-amino-acid chain; its full sequence is MAFLWISFLVFLGSGSGCHHRICHCSDRVFICQESKVTEIPSDIPRNTVEMRFVLTKLQVIPRGAFSGFRDLEKIEISQNDALEVIEADVFSNLPKLHEIRIEKANNLVLIDPEAFWNLPNLRYLLISNTGIKHLPAVYKIQSHQKVLLDIQDNINIRTIERNSFAGLSSESEILWLNKNGIQEIQNQAFNGTQLDELNLSDNINLEDLPNGIFQGANGPVILDISRTRIHSLPSDGLKNLKKLKARSAYNFKTLPNLDKFAELVEANLTYPSHCCAFANWRRQAFELHPICNKSFVRQDSDDLAMDWGHRRRSVEEEYVSNLDKGFDITDTELDYDLCNEVVDVACSPKPDAFNPCEDIMGYNFLRVLIWFISILSITGNIVVLVILITSQYKLTVPRFLMCNLAFADLCIGIYLLLIASVDIHTKSQYHNYAIDWQTGAGCDAAGFFTVFASELSVYTLTAITLERWHTITYAMQLDRKVRLRHAASIMLIGWIFAFSVALLPIFGVSSYMKVSICLPMDIDSPLSQFYVISLLVLNVLASVIICTCYTHIYFTVRNPNIISSTSDAKIAKRMAMLIFTDFLCMAPISFFAISASVKMPLITVSKSKILLVLFYPINSCANPFLYAVFTKTFRRDFFILLSKFGCCEMQAQIYRTETSSTVHSSHPRNGQCPLMAKSNSGAVYKLVPLNHLS.

The signal sequence occupies residues 1 to 17; it reads MAFLWISFLVFLGSGSG. Intrachain disulfides connect cysteine 18–cysteine 25 and cysteine 23–cysteine 32. In terms of domain architecture, LRRNT spans 18–46; the sequence is CHHRICHCSDRVFICQESKVTEIPSDIPR. At 18–367 the chain is on the extracellular side; it reads CHHRICHCSD…EDIMGYNFLR (350 aa). 9 LRR repeats span residues 49 to 72, 73 to 97, 98 to 118, 119 to 143, 144 to 169, 170 to 192, 193 to 216, 217 to 240, and 241 to 259; these read VEMR…FRDL, EKIE…LPKL, HEIR…AFWN, LPNL…KIQS, HQKV…AGLS, SESE…AFNG, TQLD…IFQG, ANGP…GLKN, and LKKL…PNLD. 2 N-linked (GlcNAc...) asparagine glycosylation sites follow: asparagine 191 and asparagine 199. Asparagine 268 carries N-linked (GlcNAc...) asparagine glycosylation. 4 disulfide bridges follow: cysteine 275/cysteine 347, cysteine 276/cysteine 292, cysteine 276/cysteine 357, and cysteine 292/cysteine 339. Asparagine 293 is a glycosylation site (N-linked (GlcNAc...) asparagine). Position 336 is a sulfotyrosine (tyrosine 336). Residues 368–388 form a helical membrane-spanning segment; sequence VLIWFISILSITGNIVVLVIL. The Cytoplasmic portion of the chain corresponds to 389 to 399; it reads ITSQYKLTVPR. A helical transmembrane segment spans residues 400–422; that stretch reads FLMCNLAFADLCIGIYLLLIASV. Over 423–444 the chain is Extracellular; it reads DIHTKSQYHNYAIDWQTGAGCD. Cysteine 443 and cysteine 518 are disulfide-bonded. A helical transmembrane segment spans residues 445–466; that stretch reads AAGFFTVFASELSVYTLTAITL. Residues 467–486 lie on the Cytoplasmic side of the membrane; the sequence is ERWHTITYAMQLDRKVRLRH. Residues 487–509 traverse the membrane as a helical segment; that stretch reads AASIMLIGWIFAFSVALLPIFGV. The Extracellular portion of the chain corresponds to 510–529; it reads SSYMKVSICLPMDIDSPLSQ. The helical transmembrane segment at 530 to 551 threads the bilayer; the sequence is FYVISLLVLNVLASVIICTCYT. Topologically, residues 552-574 are cytoplasmic; sequence HIYFTVRNPNIISSTSDAKIAKR. The helical transmembrane segment at 575 to 598 threads the bilayer; that stretch reads MAMLIFTDFLCMAPISFFAISASV. Residues 599–609 lie on the Extracellular side of the membrane; the sequence is KMPLITVSKSK. Residues 610–631 form a helical membrane-spanning segment; sequence ILLVLFYPINSCANPFLYAVFT. At 632-694 the chain is on the cytoplasmic side; the sequence is KTFRRDFFIL…YKLVPLNHLS (63 aa).

Belongs to the G-protein coupled receptor 1 family. FSH/LSH/TSH subfamily. As to quaternary structure, homotrimer. Functions as a homotrimer binding the FSH hormone heterodimer composed of CGA and FSHB. Interacts with ARRB2. Interacts with APPL2; interaction is independent of follicle stimulating hormone stimulation. In terms of processing, N-glycosylated; indirectly required for FSH-binding, possibly via a conformational change that allows high affinity binding of hormone. Sulfated.

It localises to the cell membrane. Its function is as follows. G protein-coupled receptor for follitropin, the follicle-stimulating hormone. Through cAMP production activates the downstream PI3K-AKT and ERK1/ERK2 signaling pathways. In Notamacropus eugenii (Tammar wallaby), this protein is Follicle-stimulating hormone receptor (FSHR).